Here is a 500-residue protein sequence, read N- to C-terminus: L-arabinose isomerase (500 aa).

Residues Glu-306, Glu-333, His-350, and His-450 each contribute to the Mn(2+) site.

This sequence belongs to the arabinose isomerase family. In terms of assembly, homohexamer. Mn(2+) is required as a cofactor.

It carries out the reaction beta-L-arabinopyranose = L-ribulose. The protein operates within carbohydrate degradation; L-arabinose degradation via L-ribulose; D-xylulose 5-phosphate from L-arabinose (bacterial route): step 1/3. Catalyzes the conversion of L-arabinose to L-ribulose. In Yersinia enterocolitica serotype O:8 / biotype 1B (strain NCTC 13174 / 8081), this protein is L-arabinose isomerase.